The primary structure comprises 386 residues: Alkanesulfonate monooxygenase (386 aa).

It belongs to the SsuD family.

It carries out the reaction an alkanesulfonate + FMNH2 + O2 = an aldehyde + FMN + sulfite + H2O + 2 H(+). Catalyzes the desulfonation of aliphatic sulfonates. The polypeptide is Alkanesulfonate monooxygenase (Delftia acidovorans (strain DSM 14801 / SPH-1)).